Here is a 76-residue protein sequence, read N- to C-terminus: Acyl carrier protein (76 aa).

Residues 1-76 (MSIEERVKKI…SAIDYVQNNQ (76 aa)) form the Carrier domain. An O-(pantetheine 4'-phosphoryl)serine modification is found at Ser36.

It belongs to the acyl carrier protein (ACP) family. 4'-phosphopantetheine is transferred from CoA to a specific serine of apo-ACP by AcpS. This modification is essential for activity because fatty acids are bound in thioester linkage to the sulfhydryl of the prosthetic group.

The protein resides in the cytoplasm. It functions in the pathway lipid metabolism; fatty acid biosynthesis. Functionally, carrier of the growing fatty acid chain in fatty acid biosynthesis. The chain is Acyl carrier protein from Pasteurella multocida (strain Pm70).